A 287-amino-acid chain; its full sequence is ATP synthase gamma chain (287 aa).

This sequence belongs to the ATPase gamma chain family. In terms of assembly, F-type ATPases have 2 components, CF(1) - the catalytic core - and CF(0) - the membrane proton channel. CF(1) has five subunits: alpha(3), beta(3), gamma(1), delta(1), epsilon(1). CF(0) has three main subunits: a, b and c.

The protein resides in the cell inner membrane. Produces ATP from ADP in the presence of a proton gradient across the membrane. The gamma chain is believed to be important in regulating ATPase activity and the flow of protons through the CF(0) complex. The chain is ATP synthase gamma chain from Shigella boydii serotype 4 (strain Sb227).